We begin with the raw amino-acid sequence, 313 residues long: GTPase Era (313 aa).

The Era-type G domain occupies Arg20–Glu187. Residues Gly28–Ser35 are G1. Gly28 to Ser35 provides a ligand contact to GTP. Positions Gln54–Ala58 are G2. The tract at residues Asp75–Gly78 is G3. GTP-binding positions include Asp75–Ile79 and Asn137–Asp140. The segment at Asn137–Asp140 is G4. The segment at Ile166–Ala168 is G5. One can recognise a KH type-2 domain in the interval Leu218–Glu295.

This sequence belongs to the TRAFAC class TrmE-Era-EngA-EngB-Septin-like GTPase superfamily. Era GTPase family. In terms of assembly, monomer.

It localises to the cytoplasm. The protein localises to the cell inner membrane. Functionally, an essential GTPase that binds both GDP and GTP, with rapid nucleotide exchange. Plays a role in 16S rRNA processing and 30S ribosomal subunit biogenesis and possibly also in cell cycle regulation and energy metabolism. In Rhizobium meliloti (strain 1021) (Ensifer meliloti), this protein is GTPase Era.